A 95-amino-acid polypeptide reads, in one-letter code: Putative protein RDUR (95 aa).

Residues 1–12 are compositionally biased toward basic and acidic residues; sequence MNNSFNKEDRMS. The segment at 1-20 is disordered; sequence MNNSFNKEDRMSSDTMVGSC.

Its function is as follows. Could play a role in innate immunity against viruses. This is Putative protein RDUR from Homo sapiens (Human).